Consider the following 2617-residue polypeptide: DNA-directed RNA polymerase subunit beta'' (2617 aa).

Zn(2+) contacts are provided by cysteine 263, cysteine 334, cysteine 341, and cysteine 344.

Belongs to the RNA polymerase beta' chain family. RpoC2 subfamily. In terms of assembly, in plastids the minimal PEP RNA polymerase catalytic core is composed of four subunits: alpha, beta, beta', and beta''. When a (nuclear-encoded) sigma factor is associated with the core the holoenzyme is formed, which can initiate transcription. Zn(2+) serves as cofactor.

It is found in the plastid. Its subcellular location is the chloroplast. The enzyme catalyses RNA(n) + a ribonucleoside 5'-triphosphate = RNA(n+1) + diphosphate. Its function is as follows. DNA-dependent RNA polymerase catalyzes the transcription of DNA into RNA using the four ribonucleoside triphosphates as substrates. The protein is DNA-directed RNA polymerase subunit beta'' of Oedogonium cardiacum (Filamentous green alga).